Here is a 97-residue protein sequence, read N- to C-terminus: Peptide YY (97 aa).

A signal peptide spans 1–28 (MVFVRRPWPALTTVLLALLVCLGALVDA). Phosphoserine is present on serine 41. Tyrosine 64 is modified (tyrosine amide). The segment at 65 to 97 (GKRDGPDTLLSKTFFPDGEDRPVRSRSEGPDLW) is disordered. Positions 68–97 (DGPDTLLSKTFFPDGEDRPVRSRSEGPDLW) are excised as a propeptide. Over residues 82–97 (GEDRPVRSRSEGPDLW) the composition is skewed to basic and acidic residues.

It belongs to the NPY family. In terms of processing, the peptide YY form is cleaved at Pro-30 by the prolyl endopeptidase FAP (seprase) activity (in vitro) to generate peptide YY(3-36).

The protein resides in the secreted. In terms of biological role, this gut peptide inhibits exocrine pancreatic secretion, has a vasoconstrictory action and inhibitis jejunal and colonic mobility. The sequence is that of Peptide YY (PYY) from Homo sapiens (Human).